Consider the following 381-residue polypeptide: Alkanesulfonate monooxygenase (381 aa).

This sequence belongs to the SsuD family. Homotetramer.

It catalyses the reaction an alkanesulfonate + FMNH2 + O2 = an aldehyde + FMN + sulfite + H2O + 2 H(+). Catalyzes the desulfonation of aliphatic sulfonates. This Escherichia coli O127:H6 (strain E2348/69 / EPEC) protein is Alkanesulfonate monooxygenase.